Consider the following 517-residue polypeptide: Glutamate--tRNA ligase (517 aa).

Residues 10–20 (PSPSGFLHVGG) carry the 'HIGH' region motif. Zn(2+) is bound by residues C107, C109, C134, and D136. Positions 250-254 (KLSKR) match the 'KMSKS' region motif. K253 is an ATP binding site.

The protein belongs to the class-I aminoacyl-tRNA synthetase family. Glutamate--tRNA ligase type 1 subfamily. Monomer. Requires Zn(2+) as cofactor.

The protein localises to the cytoplasm. The catalysed reaction is tRNA(Glu) + L-glutamate + ATP = L-glutamyl-tRNA(Glu) + AMP + diphosphate. In terms of biological role, catalyzes the attachment of glutamate to tRNA(Glu) in a two-step reaction: glutamate is first activated by ATP to form Glu-AMP and then transferred to the acceptor end of tRNA(Glu). The polypeptide is Glutamate--tRNA ligase (Leptospira biflexa serovar Patoc (strain Patoc 1 / ATCC 23582 / Paris)).